Here is a 284-residue protein sequence, read N- to C-terminus: Tryptophan 2,3-dioxygenase (284 aa).

Residues 51 to 55 (FIIQH), Tyr113, and Arg117 contribute to the substrate site. His240 is a heme binding site. Thr254 is a binding site for substrate.

This sequence belongs to the tryptophan 2,3-dioxygenase family. As to quaternary structure, homotetramer. Requires heme as cofactor.

It carries out the reaction L-tryptophan + O2 = N-formyl-L-kynurenine. It functions in the pathway amino-acid degradation; L-tryptophan degradation via kynurenine pathway; L-kynurenine from L-tryptophan: step 1/2. Functionally, heme-dependent dioxygenase that catalyzes the oxidative cleavage of the L-tryptophan (L-Trp) pyrrole ring and converts L-tryptophan to N-formyl-L-kynurenine. Catalyzes the oxidative cleavage of the indole moiety. The polypeptide is Tryptophan 2,3-dioxygenase (Arthrobacter sp. (strain FB24)).